Reading from the N-terminus, the 100-residue chain is Chorion class A protein M2774 (100 aa).

Residues 1–33 (GGGWNGWNGLGGGWNGLGVGWSRLDGGYGGGCG) form a left arm region. The interval 34-81 (SYGGEGIGNVGVADELPVGGVTAVGGRVPIIGGVEYGGPARAAGAVSI) is central domain. A right arm region spans residues 82–100 (CGHCAPTCGCGRAGLGGYY).

Belongs to the chorion protein family.

Its function is as follows. This protein is one of many from the eggshell of the silk moth. This chain is Chorion class A protein M2774, found in Bombyx mori (Silk moth).